The sequence spans 498 residues: Glycerol kinase (498 aa).

T14 serves as a coordination point for ADP. ATP contacts are provided by T14 and T15. A sn-glycerol 3-phosphate-binding site is contributed by T14. An ADP-binding site is contributed by R18. Sn-glycerol 3-phosphate contacts are provided by R84, E85, Y136, and D246. Glycerol contacts are provided by R84, E85, Y136, D246, and Q247. T268 and G311 together coordinate ADP. T268, G311, Q315, and G412 together coordinate ATP. Residues G412 and N416 each contribute to the ADP site.

It belongs to the FGGY kinase family.

It carries out the reaction glycerol + ATP = sn-glycerol 3-phosphate + ADP + H(+). Its pathway is polyol metabolism; glycerol degradation via glycerol kinase pathway; sn-glycerol 3-phosphate from glycerol: step 1/1. Inhibited by fructose 1,6-bisphosphate (FBP). Its function is as follows. Key enzyme in the regulation of glycerol uptake and metabolism. Catalyzes the phosphorylation of glycerol to yield sn-glycerol 3-phosphate. The protein is Glycerol kinase of Leptospira biflexa serovar Patoc (strain Patoc 1 / Ames).